The sequence spans 909 residues: GTPase activating protein homolog 4 (909 aa).

In terms of domain architecture, F-BAR spans 1–257 (MASLIGSAKL…PTPDFQFESC (257 aa)). Residues 322–513 (IPIEEIMFKQ…LIIEGYLKLS (192 aa)) form the Rho-GAP domain. The disordered stretch occupies residues 529-909 (IPSFSNNNNN…QRVPPPPSQS (381 aa)). 2 stretches are compositionally biased toward low complexity: residues 533-562 (SNNNNNSTTTTTTTTTTTVPSSTSTNITTN) and 571-602 (SSTTPLPSLTTFSQSQSSSPPNQPSPSITPQQ). A compositionally biased stretch (pro residues) spans 609 to 625 (SYQPPQPPPTMAPPPLF). Residues 651 to 674 (QYTQSSSNLPPIQLGVTNSPSKPQ) are compositionally biased toward polar residues. Residues 672–809 (KPQLSDKQKE…QQLQQQSNGS (138 aa)) adopt a coiled-coil conformation. Over residues 675 to 716 (LSDKQKEKEKEKEKEKEKEKEREKEKEKEKEKEKEKEKEKEK) the composition is skewed to basic and acidic residues. Residues 723 to 741 (SSSTSPNSSSLSISNFLSS) are compositionally biased toward low complexity. Residues 742–765 (NKDKDKEKDKEKEKEKEKEKDKEI) are compositionally biased toward basic and acidic residues. Positions 767 to 785 (ATNSTPEKPVSNRMSLIFS) are enriched in polar residues. Composition is skewed to low complexity over residues 786 to 828 (QQLQ…MSPS) and 843 to 892 (SGTS…ELKS).

Its subcellular location is the cytoplasm. The protein localises to the contractile vacuole. Functionally, rho GTPase-activating protein involved in the signal transduction pathway. In Dictyostelium discoideum (Social amoeba), this protein is GTPase activating protein homolog 4 (mgp4).